The following is a 686-amino-acid chain: Amphiphysin (686 aa).

Coiled coils occupy residues 10–83 (AKNV…SLHE) and 144–191 (DYDS…QEEL). The BAR domain occupies 24 to 240 (VLQKLGKADE…MTKLGDQHAD (217 aa)). Disordered regions lie at residues 244 to 314 (SIQG…PTKE), 421 to 441 (AETEQALPTEPQAEEPPATAA), and 483 to 597 (VEEA…AGAV). Ser-252 is subject to Phosphoserine. The residue at position 260 (Thr-260) is a Phosphothreonine. Residues 261-274 (PSPPEEPSPLPSPT) show a composition bias toward pro residues. Ser-262, Ser-268, Ser-272, and Ser-276 each carry phosphoserine. The residue at position 280 (Thr-280) is a Phosphothreonine. Low complexity predominate over residues 424–441 (EQALPTEPQAEEPPATAA). At Ser-500 the chain carries Phosphoserine. The segment covering 541-562 (SNHEGEGEHQETATGTEPREAA) has biased composition (basic and acidic residues). An SH3 domain is found at 613-686 (GFLYKVETLH…FPENFTRRLE (74 aa)). The residue at position 629 (Ser-629) is a Phosphoserine.

In terms of assembly, heterodimer with BIN1. Binds SH3GLB1. Interacts with REPS1 and SGIP1. Binds AP2A2. Interacts with AP2B1. Interacts with DNM1 and SYNJ1.

The protein resides in the cytoplasmic vesicle. It is found in the secretory vesicle. It localises to the synaptic vesicle membrane. Its subcellular location is the cytoplasm. The protein localises to the cytoskeleton. Functionally, may participate in mechanisms of regulated exocytosis in synapses and certain endocrine cell types. May control the properties of the membrane associated cytoskeleton. The chain is Amphiphysin (Amph) from Mus musculus (Mouse).